The chain runs to 337 residues: Undecaprenyl-phosphate 4-deoxy-4-formamido-L-arabinose transferase (337 aa).

Helical transmembrane passes span 235–255 (LSII…LLII) and 270–290 (FVLF…MGLL).

The protein belongs to the glycosyltransferase 2 family.

The protein localises to the cell inner membrane. The enzyme catalyses UDP-4-deoxy-4-formamido-beta-L-arabinose + di-trans,octa-cis-undecaprenyl phosphate = 4-deoxy-4-formamido-alpha-L-arabinopyranosyl di-trans,octa-cis-undecaprenyl phosphate + UDP. Its pathway is glycolipid biosynthesis; 4-amino-4-deoxy-alpha-L-arabinose undecaprenyl phosphate biosynthesis; 4-amino-4-deoxy-alpha-L-arabinose undecaprenyl phosphate from UDP-4-deoxy-4-formamido-beta-L-arabinose and undecaprenyl phosphate: step 1/2. It functions in the pathway bacterial outer membrane biogenesis; lipopolysaccharide biosynthesis. Catalyzes the transfer of 4-deoxy-4-formamido-L-arabinose from UDP to undecaprenyl phosphate. The modified arabinose is attached to lipid A and is required for resistance to polymyxin and cationic antimicrobial peptides. This chain is Undecaprenyl-phosphate 4-deoxy-4-formamido-L-arabinose transferase, found in Pseudomonas savastanoi pv. phaseolicola (strain 1448A / Race 6) (Pseudomonas syringae pv. phaseolicola (strain 1448A / Race 6)).